The primary structure comprises 776 residues: GATOR2 complex protein Wdr24 (776 aa).

WD repeat units follow at residues 63-103 (NLSY…RQKQ), 109-149 (EHER…SINT), 152-192 (CNSE…KCMV), 196-235 (AHYGPVYTCDWHPTRNWLATGSRDKQIKVWNMDGRPGLEH), 238-280 (HTIA…IPFA), and 284-326 (EHTN…ALKA). The tract at residues 466–490 (HRSSFSNQKNPMNSRRATQVASDWP) is disordered. Residues 469-490 (SFSNQKNPMNSRRATQVASDWP) show a composition bias toward polar residues. The C4-type zinc finger occupies 703–726 (NCGECGRPMGGKVGWYCDKCKSMQ). Zn(2+) is bound by residues cysteine 704, cysteine 707, cysteine 719, cysteine 722, cysteine 730, cysteine 733, cysteine 744, cysteine 747, histidine 749, histidine 752, histidine 755, cysteine 766, cysteine 769, histidine 771, and cysteine 773. The RING-type; atypical zinc finger occupies 728 to 776 (AKCCVCGLIVRGVYAWCQGCSHGGHIEHLQKYFAKHSKCPKCGHLCAYS).

It belongs to the WD repeat WDR24 family. Component of the GATOR complex consisting of mio, Nup44A/Seh1, Im11, Nplr3, Nplr2, Wdr24, Wdr59 and Sec13. Within the GATOR complex, probable component of the GATOR2 subcomplex which is likely composed of mio, Nup44A/Seh1, Wdr24, Wdr59 and Sec13. Interacts with Nup44A/Seh1. Interacts with mio. Interacts with Nplr3. The GATOR2 complex associates with unmet in the absence of S-adenosyl-L-methionine; the mio-Wdr24-Nup44A subcomplex is essential and sufficient for this interaction while Wdr59 and Sec13 are dispensable. This association acts as a nutrient sensor to inhibit mTORC1 signaling in the absence of methionine.

Its subcellular location is the lysosome. It is found in the cytoplasmic vesicle. The protein resides in the autophagosome. The catalysed reaction is S-ubiquitinyl-[E2 ubiquitin-conjugating enzyme]-L-cysteine + [acceptor protein]-L-lysine = [E2 ubiquitin-conjugating enzyme]-L-cysteine + N(6)-ubiquitinyl-[acceptor protein]-L-lysine.. Its pathway is protein modification; protein ubiquitination. Functionally, an essential component of the GATOR subcomplex GATOR2 which functions as an activator of the amino acid-sensing branch of the mTORC1 signaling pathway. The two GATOR subcomplexes, GATOR1 and GATOR2, regulate the mTORC1 pathway in order to mediate metabolic homeostasis, female gametogenesis and the response to amino acid limitation and complete starvation. GATOR2 activates the mTORC1 signaling pathway through the inhibition of the GATOR1 subcomplex, controlling the switch to cell proliferation and growth under nutrient replete conditions and during female oocyte development. GATOR2 probably acts as an E3 ubiquitin-protein ligase toward GATOR1. In the presence of abundant amino acids, the GATOR2 complex mediates ubiquitination of components of the GATOR1 complex, leading to GATOR1 inactivation. This GATOR2 component is required for activating mTORC1 and promoting cell growth in both germline and somatic cells. In addition to its role in regulation of the mTORC1 complex, functions independently of mTORC1 to promote the acidification of lysosomes and facilitates autophagic flux. This is GATOR2 complex protein Wdr24 from Drosophila melanogaster (Fruit fly).